The following is a 76-amino-acid chain: Putative UPF0377 protein YGL260W (76 aa).

The protein belongs to the UPF0377 family.

The sequence is that of Putative UPF0377 protein YGL260W from Saccharomyces cerevisiae (strain ATCC 204508 / S288c) (Baker's yeast).